Here is a 130-residue protein sequence, read N- to C-terminus: Small ribosomal subunit protein uS8 (130 aa).

The protein belongs to the universal ribosomal protein uS8 family. In terms of assembly, part of the 30S ribosomal subunit. Contacts proteins S5 and S12.

Functionally, one of the primary rRNA binding proteins, it binds directly to 16S rRNA central domain where it helps coordinate assembly of the platform of the 30S subunit. The sequence is that of Small ribosomal subunit protein uS8 from Buchnera aphidicola subsp. Baizongia pistaciae (strain Bp).